Here is a 325-residue protein sequence, read N- to C-terminus: Envelope protein H3 (325 aa).

At 1-285 (MATVNKTPVI…FTTPLISFFG (285 aa)) the chain is on the virion surface side. A helical; Signal-anchor transmembrane segment spans residues 286–306 (LFDINVIGLIVILFIMFMLIF). Topologically, residues 307 to 325 (NVKSKLLWFLTGTFVTAFI) are intravirion.

The protein belongs to the orthopoxvirus OPG108 family. Post-translationally, does not contain disulfide bonds.

Its subcellular location is the virion membrane. Envelope protein that binds to heparan sulfate on the cell surface and might provide virion attachment to target cell. The protein is Envelope protein H3 (OPG108) of Variola virus (isolate Human/India/Ind3/1967) (VARV).